A 320-amino-acid polypeptide reads, in one-letter code: uncharacterized protein (320 aa).

The FHA domain occupies 22-86 (KTIGRSSSFD…IRDLNNKTGT (65 aa)). The segment at 242–264 (TDTDTTEEKEEEEEKEEGDDEEG) is disordered.

This is an uncharacterized protein from Saccharomyces cerevisiae (strain ATCC 204508 / S288c) (Baker's yeast).